The following is a 457-amino-acid chain: Phosphoglucosamine mutase (457 aa).

Serine 103 acts as the Phosphoserine intermediate in catalysis. Residues serine 103, aspartate 244, aspartate 246, and aspartate 248 each contribute to the Mg(2+) site. Serine 103 is subject to Phosphoserine.

Belongs to the phosphohexose mutase family. Requires Mg(2+) as cofactor. Activated by phosphorylation.

It carries out the reaction alpha-D-glucosamine 1-phosphate = D-glucosamine 6-phosphate. Catalyzes the conversion of glucosamine-6-phosphate to glucosamine-1-phosphate. This Granulibacter bethesdensis (strain ATCC BAA-1260 / CGDNIH1) protein is Phosphoglucosamine mutase.